A 229-amino-acid chain; its full sequence is MSSLREIILDTETTGLDPQQGHRIIEIGAIEMVNKVLTGKHFHCYINPERDMPFEAYKIHGISGEFLKDKPLFHTIANDFLKFIADSTLIIHNAPFDIKFLNHELSLLKRTEIKFLELTNTIDTLVMARSMFPGARYSLDALCKRFKVDNSGRQLHGALKDAALLAEVYVALTGGRQSTFKMIDKPNEINNLTVKCIEVQKIKRSIVVKPTKEELQKHKEFIDKILIQA.

Positions 10 and 12 each coordinate a divalent metal cation. 4 residues coordinate substrate: Asp-10, Glu-12, Glu-55, and His-60. Catalysis depends on His-156, which acts as the Proton acceptor. Residue Asp-161 participates in a divalent metal cation binding. Asp-161 is a substrate binding site.

As to quaternary structure, DNA polymerase III contains a core (composed of alpha, epsilon and theta chains) that associates with a tau subunit. This core dimerizes to form the POLIII' complex. PolIII' associates with the gamma complex (composed of gamma, delta, delta', psi and chi chains) and with the beta chain to form the complete DNA polymerase III complex. Mg(2+) is required as a cofactor. Mn(2+) serves as cofactor.

It catalyses the reaction DNA(n) + a 2'-deoxyribonucleoside 5'-triphosphate = DNA(n+1) + diphosphate. In terms of biological role, DNA polymerase III is a complex, multichain enzyme responsible for most of the replicative synthesis in bacteria. The epsilon subunit contain the editing function and is a proofreading 3'-5' exonuclease. The chain is DNA polymerase III subunit epsilon (dnaQ) from Rickettsia typhi (strain ATCC VR-144 / Wilmington).